A 171-amino-acid chain; its full sequence is MEYNTSALCDIYLDQVDVVEPMFSNFGGCASFAGQITTIKCYEDNGLIRETLEQDGLGRILLIDGGGSLRRALIDAELAALAEENEWEGIVVYGSVREVDELEEMSIGIQAIASIPVGATSQGIGEVDIPVNFGGVTFLPEDYLYADNTGIIISQEPLSADLGEEEEDELL.

It belongs to the RraA family. As to quaternary structure, homotrimer. Binds to both RNA-binding sites in the C-terminal region of Rne and to RhlB.

It is found in the cytoplasm. Its function is as follows. Globally modulates RNA abundance by binding to RNase E (Rne) and regulating its endonucleolytic activity. Can modulate Rne action in a substrate-dependent manner by altering the composition of the degradosome. Modulates RNA-binding and helicase activities of the degradosome. This is Regulator of ribonuclease activity A from Vibrio cholerae serotype O1 (strain ATCC 39315 / El Tor Inaba N16961).